A 31-amino-acid chain; its full sequence is Nemertide alpha-7 (31 aa).

Intrachain disulfides connect cysteine 2–cysteine 16, cysteine 9–cysteine 20, and cysteine 15–cysteine 26. The residue at position 29 (proline 29) is a 4-hydroxyproline.

Belongs to the nemertide family. As to expression, confined to the epidermis and to the mucus layer.

The protein localises to the secreted. Functionally, potent toxin, demonstrating strong inhibitory effects on insect sodium channels (Nav) and reduced activity on mammalian sodium channels. Potently inhibits inactivation of insect sodium channels of B.germanica (BgNav1) (EC(50)=9.5 nM). The toxin also delays the inactivation of most mammalian Nav (human Nav1.1/SCN1A; EC(50)=171.5 nM, rat Nav1.2/SCN2A; EC(50)=50.4 nM, rat Nav1.3/SCN3A; EC(50)=170.2 nM, rat Nav1.4/SCN4A; EC(50)=810.6 nM, human Nav1.5/SCN5A; EC(50)=155.6 nM, mouse Nav1.6/SCN8A; EC(50)=147.6 nM, human Nav1.9/SCN9A; EC(50)=129 nM). Inactivation is completely prevented by a concentration of 1 uM, resulting in sustained, non-inactivating currents. In addition, the toxin significantly enhances the recovery from inactivation, and the open state is not required for the toxin to interact with the channel. In vivo, injection into brine shrimp (Artemia salina) stops movement or causes death after 24 hours (EC(50)=6.1 uM). This Lineus ruber (Red bootlace) protein is Nemertide alpha-7.